We begin with the raw amino-acid sequence, 248 residues long: NADH dehydrogenase [ubiquinone] flavoprotein 2, mitochondrial (248 aa).

The N-terminal 31 residues, 1–31 (MFSLALRARASGLTAQWGRHARNLHKTAVQN), are a transit peptide targeting the mitochondrion. [2Fe-2S] cluster is bound by residues C134, C139, C175, and C179. A Phosphotyrosine; by SRC modification is found at Y192. The tract at residues 229-248 (GLTSLTEPPKGPGFGVQAGL) is disordered.

It belongs to the complex I 24 kDa subunit family. In terms of assembly, core subunit of respiratory chain NADH dehydrogenase (Complex I) which is composed of 45 different subunits. This is a component of the flavoprotein-sulfur (FP) fragment of the enzyme. [2Fe-2S] cluster serves as cofactor.

It localises to the mitochondrion inner membrane. The catalysed reaction is a ubiquinone + NADH + 5 H(+)(in) = a ubiquinol + NAD(+) + 4 H(+)(out). Core subunit of the mitochondrial membrane respiratory chain NADH dehydrogenase (Complex I) which catalyzes electron transfer from NADH through the respiratory chain, using ubiquinone as an electron acceptor. Parts of the peripheral arm of the enzyme, where the electrons from NADH are accepted by flavin mononucleotide (FMN) and then passed along a chain of iron-sulfur clusters by electron tunnelling to the final acceptor ubiquinone. Contains one iron-sulfur cluster. The protein is NADH dehydrogenase [ubiquinone] flavoprotein 2, mitochondrial of Rattus norvegicus (Rat).